The primary structure comprises 582 residues: ATP-dependent lipid A-core flippase (582 aa).

5 helical membrane-spanning segments follow: residues 26-46 (LIAASVALILNALVDSSLIYL), 68-88 (ILVMLFILLRGVSNYIASYCL), 140-160 (YVLVTIVREGAYLISLFAVMV), 164-184 (WQLSIVLFLLAPIIAFLISIV), and 252-272 (GLVQLIASLALSAVLYVATFP). The ABC transmembrane type-1 domain maps to 27-310 (IAASVALILN…LTSVNSQFQR (284 aa)). Residues 342–578 (ITFDNVIFSY…GGAYKQLYSM (237 aa)) enclose the ABC transporter domain. Residue 376–383 (GRSGSGKS) participates in ATP binding.

The protein belongs to the ABC transporter superfamily. Lipid exporter (TC 3.A.1.106) family. As to quaternary structure, homodimer.

It is found in the cell inner membrane. The catalysed reaction is ATP + H2O + lipid A-core oligosaccharideSide 1 = ADP + phosphate + lipid A-core oligosaccharideSide 2.. In terms of biological role, involved in lipopolysaccharide (LPS) biosynthesis. Translocates lipid A-core from the inner to the outer leaflet of the inner membrane. Transmembrane domains (TMD) form a pore in the inner membrane and the ATP-binding domain (NBD) is responsible for energy generation. The chain is ATP-dependent lipid A-core flippase from Haemophilus ducreyi (strain 35000HP / ATCC 700724).